A 576-amino-acid chain; its full sequence is Aspartate--tRNA ligase (576 aa).

Glutamate 171 lines the L-aspartate pocket. The tract at residues 195-198 is aspartate; sequence QLFK. Arginine 217 lines the L-aspartate pocket. ATP-binding positions include 217 to 219 and glutamine 226; that span reads RDE. Histidine 450 lines the L-aspartate pocket. Glutamate 484 contributes to the ATP binding site. Residue arginine 491 participates in L-aspartate binding. 536-539 is a binding site for ATP; it reads GLDR.

It belongs to the class-II aminoacyl-tRNA synthetase family. Type 1 subfamily. Homodimer.

Its subcellular location is the cytoplasm. The enzyme catalyses tRNA(Asp) + L-aspartate + ATP = L-aspartyl-tRNA(Asp) + AMP + diphosphate. Functionally, catalyzes the attachment of L-aspartate to tRNA(Asp) in a two-step reaction: L-aspartate is first activated by ATP to form Asp-AMP and then transferred to the acceptor end of tRNA(Asp). The polypeptide is Aspartate--tRNA ligase (Buchnera aphidicola subsp. Baizongia pistaciae (strain Bp)).